Reading from the N-terminus, the 337-residue chain is tRNA N6-adenosine threonylcarbamoyltransferase (337 aa).

Residues H107 and H111 each contribute to the Fe cation site. Substrate is bound by residues 129–133 (LISGG), D162, G175, and N271. Residue D299 coordinates Fe cation.

It belongs to the KAE1 / TsaD family. Requires Fe(2+) as cofactor.

The protein localises to the cytoplasm. It carries out the reaction L-threonylcarbamoyladenylate + adenosine(37) in tRNA = N(6)-L-threonylcarbamoyladenosine(37) in tRNA + AMP + H(+). In terms of biological role, required for the formation of a threonylcarbamoyl group on adenosine at position 37 (t(6)A37) in tRNAs that read codons beginning with adenine. Is involved in the transfer of the threonylcarbamoyl moiety of threonylcarbamoyl-AMP (TC-AMP) to the N6 group of A37, together with TsaE and TsaB. TsaD likely plays a direct catalytic role in this reaction. The sequence is that of tRNA N6-adenosine threonylcarbamoyltransferase from Sulfurovum sp. (strain NBC37-1).